A 619-amino-acid chain; its full sequence is TOX high mobility group box family member 4 (619 aa).

Disordered regions lie at residues 153 to 227 (LGLS…QKPV) and 304 to 337 (DMDP…PPAL). T176 is subject to Phosphothreonine. Residues S178, S181, and S182 each carry the phosphoserine modification. Residues 183 to 193 (LHEDGVEEFRR) show a composition bias toward basic and acidic residues. The span at 208-218 (KQKAPKKRKKK) shows a compositional bias: basic residues. The Nuclear localization signal signature appears at 213 to 218 (KKRKKK). A DNA-binding region (HMG box) is located at residues 223–291 (PQKPVSAYAL…EYLKALAAYK (69 aa)). A compositionally biased stretch (pro residues) spans 307 to 319 (PAPPSQTPSPPPV). T313 bears the Phosphothreonine mark. Phosphoserine is present on S315. A compositionally biased stretch (low complexity) spans 320 to 337 (AAADPASPAPASTEPPAL). R479 carries the asymmetric dimethylarginine modification. Positions 507-529 (PPPVESSPEQPVNNSPETHTVEE) are disordered. Low complexity predominate over residues 512–524 (SSPEQPVNNSPET). A phosphoserine mark is found at S548, S550, S558, S560, and S565.

As to quaternary structure, component of the PNUTS-PP1 phosphatase complex, composed of PPP1R10/PNUTS, TOX4, WDR82 and PPP1CA or PPP1CB or PPP1CC. Interacts with PPP1R10/PNUTS. Interacts with FOXO1 and CREB1 (increased by cAMP); FOXO1 and CREB1 are required for full induction of TOX4-dependent activity and the interactions are inhibited by insulin.

Its subcellular location is the nucleus. The protein localises to the chromosome. In liver, recruited to target gene promoters following treatment with dexamethasone and cAMP. Binding is decreased in presence of insulin. Functionally, transcription factor that modulates cell fate reprogramming from the somatic state to the pluripotent and neuronal fate. In liver, controls the expression of hormone-regulated gluconeogenic genes such as G6PC1 and PCK1. This regulation is independent of the insulin receptor activation. Also acts as a regulatory component of protein phosphatase 1 (PP1) complexes. Component of the PNUTS-PP1 protein phosphatase complex, a PP1 complex that regulates RNA polymerase II transcription pause-release. PNUTS-PP1 also plays a role in the control of chromatin structure and cell cycle progression during the transition from mitosis into interphase. This Bos taurus (Bovine) protein is TOX high mobility group box family member 4 (TOX4).